The sequence spans 228 residues: Prolactin-2A1 (228 aa).

A signal peptide spans M1 to L29. Intrachain disulfides connect C87–C203 and C220–C228.

The protein belongs to the somatotropin/prolactin family. In terms of tissue distribution, expressed specifically in the placenta. Highly expressed in invasive trophoblast cells lining the central placental vessel.

It localises to the secreted. The polypeptide is Prolactin-2A1 (Prl2a1) (Rattus norvegicus (Rat)).